Consider the following 316-residue polypeptide: Beta-lactamase 3 (316 aa).

The N-terminal stretch at 1 to 29 (MFVLNKFFTNSHYKKIVPVVLLSCATLIG) is a signal peptide. Cys30 is lipidated: N-palmitoyl cysteine. Residue Cys30 is the site of S-diacylglycerol cysteine attachment. Positions 34–53 (NTQSESNKQTNQTNQVKQEN) are disordered. A compositionally biased stretch (low complexity) spans 40–50 (NKQTNQTNQVK). Ser95 acts as the Acyl-ester intermediate in catalysis. The active-site Proton acceptor is Glu191. Substrate is bound at residue 257–259 (KTG).

This sequence belongs to the class-A beta-lactamase family.

The protein localises to the cell membrane. The enzyme catalyses a beta-lactam + H2O = a substituted beta-amino acid. The polypeptide is Beta-lactamase 3 (blaZ) (Bacillus cereus).